Consider the following 84-residue polypeptide: Acetylcholine receptor subunit alpha (84 aa).

Cys7 and Cys21 are joined by a disulfide. N-linked (GlcNAc...) asparagine glycans are attached at residues Asn20 and Asn66. A disulfide bond links Cys71 and Cys72.

The protein belongs to the ligand-gated ion channel (TC 1.A.9) family. Acetylcholine receptor (TC 1.A.9.1) subfamily. Alpha-1/CHRNA1 sub-subfamily. One of the alpha chains that assemble within the acetylcholine receptor, a pentamer of two alpha chains, a beta, a delta, and a gamma (in immature muscle) or epsilon (in mature muscle) chains. The muscle heteropentamer composed of alpha-1, beta-1, delta, epsilon subunits interacts with the alpha-conotoxin ImII.

It localises to the postsynaptic cell membrane. Its subcellular location is the cell membrane. It catalyses the reaction K(+)(in) = K(+)(out). It carries out the reaction Na(+)(in) = Na(+)(out). Functionally, upon acetylcholine binding, the AChR responds by an extensive change in conformation that affects all subunits and leads to opening of an ion-conducting channel across the plasma membrane. The protein is Acetylcholine receptor subunit alpha (CHRNA1) of Herpestes ichneumon (Egyptian mongoose).